The primary structure comprises 583 residues: Immunity-related GTPase family Q protein (583 aa).

Cys-152 and Cys-158 are disulfide-bonded. A coiled-coil region spans residues Ser-155 to Leu-179. Residues Phe-186–Leu-189 carry the LIR 1 motif. Residue Thr-203 is modified to Phosphothreonine. The IRG-type G domain occupies Ala-223–Ala-409. Residues Ala-322–Ala-373 are disordered. A compositionally biased stretch (acidic residues) spans Gln-332–Glu-341. Residues Trp-381–Leu-384 carry the LIR 2 motif.

Belongs to the TRAFAC class dynamin-like GTPase superfamily. IRG family. As to quaternary structure, interacts (via LIR motif 1) with GABARAPL2. Interacts (via LIR motif 2) with MAP1LC3B/LC3B.

The protein resides in the lysosome. It is found in the cytoplasmic vesicle. It localises to the autophagosome. Its function is as follows. Autophagy receptor that specifically promotes clearance of misfolded MHC class I molecules by targeting them to the lysosome for degradation. Acts as a molecular adapter that specifically recognizes and binds (1) misfolded MHC class I molecules following their ubiquitination, as well as (2) autophagy-related proteins, promoting the recruitment of misfolded MHC class I molecules to autophagy machinery for degradation. Degradation of misfolded MHC class I molecules is essential to prevent accumulation of defective MHC class I complexes at the surface of CD8(+) T-cells and prevent a stronger T-cell-mediated response. In contrast to other members of the family, does not show GTPase activity. The protein is Immunity-related GTPase family Q protein (Irgq) of Mus musculus (Mouse).